The following is a 107-amino-acid chain: Nucleoid-associated protein GDI3467/Gdia_2910 (107 aa).

It belongs to the YbaB/EbfC family. Homodimer.

Its subcellular location is the cytoplasm. It localises to the nucleoid. In terms of biological role, binds to DNA and alters its conformation. May be involved in regulation of gene expression, nucleoid organization and DNA protection. This Gluconacetobacter diazotrophicus (strain ATCC 49037 / DSM 5601 / CCUG 37298 / CIP 103539 / LMG 7603 / PAl5) protein is Nucleoid-associated protein GDI3467/Gdia_2910.